Here is a 511-residue protein sequence, read N- to C-terminus: Histidine ammonia-lyase (511 aa).

The segment at residues 142 to 144 (ASG) is a cross-link (5-imidazolinone (Ala-Gly)). S143 bears the 2,3-didehydroalanine (Ser) mark.

The protein belongs to the PAL/histidase family. In terms of processing, contains an active site 4-methylidene-imidazol-5-one (MIO), which is formed autocatalytically by cyclization and dehydration of residues Ala-Ser-Gly.

It is found in the cytoplasm. It carries out the reaction L-histidine = trans-urocanate + NH4(+). It functions in the pathway amino-acid degradation; L-histidine degradation into L-glutamate; N-formimidoyl-L-glutamate from L-histidine: step 1/3. The protein is Histidine ammonia-lyase of Brucella suis biovar 1 (strain 1330).